Here is a 203-residue protein sequence, read N- to C-terminus: UPF0637 protein Sca_0732 (203 aa).

It belongs to the UPF0637 family.

This chain is UPF0637 protein Sca_0732, found in Staphylococcus carnosus (strain TM300).